A 441-amino-acid chain; its full sequence is Glutamyl-tRNA reductase (441 aa).

Substrate is bound by residues 49-52 (TCNR), serine 110, 115-117 (EPQ), and glutamine 121. The active-site Nucleophile is the cysteine 50. Residue 190–195 (GAGEMA) participates in NADP(+) binding.

Belongs to the glutamyl-tRNA reductase family. Homodimer.

The enzyme catalyses (S)-4-amino-5-oxopentanoate + tRNA(Glu) + NADP(+) = L-glutamyl-tRNA(Glu) + NADPH + H(+). It functions in the pathway porphyrin-containing compound metabolism; protoporphyrin-IX biosynthesis; 5-aminolevulinate from L-glutamyl-tRNA(Glu): step 1/2. Its function is as follows. Catalyzes the NADPH-dependent reduction of glutamyl-tRNA(Glu) to glutamate 1-semialdehyde (GSA). This chain is Glutamyl-tRNA reductase, found in Sulfurihydrogenibium sp. (strain YO3AOP1).